The following is a 250-amino-acid chain: Non-specific acid phosphatase (250 aa).

The signal sequence occupies residues 1 to 20 (MKSRYLLFFLPLIVAKYTSA).

It belongs to the class A bacterial acid phosphatase family. Homodimer.

The protein localises to the periplasm. The catalysed reaction is a phosphate monoester + H2O = an alcohol + phosphate. In Salmonella typhi, this protein is Non-specific acid phosphatase (phoN).